A 363-amino-acid chain; its full sequence is Fructose-bisphosphate aldolase A (363 aa).

Arg-43 is a binding site for beta-D-fructose 1,6-bisphosphate. The active-site Proton acceptor is Glu-188. The Schiff-base intermediate with dihydroxyacetone-P role is filled by Lys-230. Residues 272-274 (SGG), Ser-301, and Arg-304 contribute to the beta-D-fructose 1,6-bisphosphate site.

The protein belongs to the class I fructose-bisphosphate aldolase family. As to quaternary structure, tetramer.

It catalyses the reaction beta-D-fructose 1,6-bisphosphate = D-glyceraldehyde 3-phosphate + dihydroxyacetone phosphate. Its pathway is carbohydrate degradation; glycolysis; D-glyceraldehyde 3-phosphate and glycerone phosphate from D-glucose: step 4/4. Its function is as follows. Plays a key role in glycolysis and gluconeogenesis. This Salmo salar (Atlantic salmon) protein is Fructose-bisphosphate aldolase A.